The chain runs to 91 residues: Probable Fe(2+)-trafficking protein (91 aa).

Belongs to the Fe(2+)-trafficking protein family.

In terms of biological role, could be a mediator in iron transactions between iron acquisition and iron-requiring processes, such as synthesis and/or repair of Fe-S clusters in biosynthetic enzymes. The polypeptide is Probable Fe(2+)-trafficking protein (Glaesserella parasuis serovar 5 (strain SH0165) (Haemophilus parasuis)).